Reading from the N-terminus, the 445-residue chain is Glycine--tRNA ligase (445 aa).

Residues Lys97 and Glu145 each coordinate substrate. Residues 177–179 (RNE), 187–192 (FRTCEF), 262–263 (EI), and 308–311 (GLTR) contribute to the ATP site. 192 to 196 (FEQME) is a substrate binding site. 304–308 (ETSLG) serves as a coordination point for substrate.

Belongs to the class-II aminoacyl-tRNA synthetase family. In terms of assembly, homodimer.

Its subcellular location is the cytoplasm. It catalyses the reaction tRNA(Gly) + glycine + ATP = glycyl-tRNA(Gly) + AMP + diphosphate. In terms of biological role, catalyzes the attachment of glycine to tRNA(Gly). This Borrelia hermsii (strain HS1 / DAH) protein is Glycine--tRNA ligase.